The sequence spans 130 residues: Small ribosomal subunit protein bS6 (130 aa).

The interval 100–130 is disordered; the sequence is SPMVKAKDERRERREDFAEAGDDVDAGDSEE. A compositionally biased stretch (basic and acidic residues) spans 104–116; sequence KAKDERRERREDF. Acidic residues predominate over residues 117 to 130; it reads AEAGDDVDAGDSEE.

Belongs to the bacterial ribosomal protein bS6 family.

Its function is as follows. Binds together with bS18 to 16S ribosomal RNA. The chain is Small ribosomal subunit protein bS6 from Pectobacterium carotovorum subsp. carotovorum (strain PC1).